The sequence spans 390 residues: MEVDLPVHNEYDASRFHQVTIRDPIAGADSTFTIPTRYVNLSFLNAGAQGTVVMADDLVTTQRVAIKKMQQPFVMTMSAKRAYREFILLTTIKHPNIIRLLNAFTPDTSLSTFREVYLVMELMTHNLHEVIHRLRLDHKTLSFFVYQSLCAIKHLHNSGVIHRDLKPSNIVVNDRCVLKVLDFGLARKKNVDTSMRMSDYVVTRYYRAPEVILGLPYSEKVDIWSVGCIFAEMINHTVLFPGKDRIDQWTKIYSVLGTPDDHFISQLGQSAAMYVRSLPRHQARAFSEIVPDTNFLPETENPRVHLTPHVARDLLFNMLKINPEERYSVEDALNHPYVKLWFKDDEVNAPASENRYDQEIDFADKTLIEWKELIFNEVQRYQADHDIFTG.

The region spanning 38-338 (YVNLSFLNAG…VEDALNHPYV (301 aa)) is the Protein kinase domain. Residues 44–52 (LNAGAQGTV) and Lys67 contribute to the ATP site. Residue Asp164 is the Proton acceptor of the active site. Ser198 is subject to Phosphoserine. Tyr200 bears the Phosphotyrosine mark.

Belongs to the protein kinase superfamily. CMGC Ser/Thr protein kinase family. MAP kinase subfamily. In terms of assembly, interacts with glh-1, glh-2 (via C-terminus), glh-3 (via C-terminus) and glh-4 (via C-terminus). Interacts with csn-5; the interaction may prevent glh-1 degradation induced by kgb-1. Interacts with fos-1. The cofactor is Mg(2+). May be phosphorylated by mek-1 on Ser-198 and/or Tyr-200. Phosphorylation is induced upon Cu(2+) and arsenite-mediated cell stimulation and by fasting. Expressed in somatic and germline tissues.

It is found in the cytoplasm. The enzyme catalyses L-seryl-[protein] + ATP = O-phospho-L-seryl-[protein] + ADP + H(+). It carries out the reaction L-threonyl-[protein] + ATP = O-phospho-L-threonyl-[protein] + ADP + H(+). Activated by mek-1 mediated phosphorylation. No differences in basal activation between larvae and adults. Inhibited by phosphatase vhp-1. In terms of biological role, mitogen-activated protein kinase which is an essential component of the JNK pathway composed of mlk-1, mek-1 and kgb-1. Phosphorylates the transcription factor fos-1 which prevents fos-1 dimerization and promoter binding and results in activation of target genes including F53A9.2/kreg-1 and lys-3/kreg-2. Phosphorylates jun-1 and activates the AP-1 transcription factor which is a heterodimer of jun-1 and fos-1. Phosphorylates glh-1 in vitro which may play a role in controlling glh-1 protein levels in the germline by targeting it for degradation by the proteasome. Required for oogenesis and probably also for spermatogenesis. Involved in the response to environmental stress such as heavy metals, infection and protein folding stress in an age-dependent manner. In larvae, has a protective role which becomes detrimental in adults. May control susceptibility to infection, heavy metal stress and premature lethality by regulating daf-16 cellular localization. Involved in the transcriptional response to bacterial pore-forming toxins and to fasting. Required for fasting-induced longevity. Involved in axon regeneration after injury downstream of tyrosine receptor svh-2. The polypeptide is GLH-binding kinase 1 (Caenorhabditis elegans).